A 69-amino-acid polypeptide reads, in one-letter code: M-poneratoxin-Dq4e (69 aa).

The signal sequence occupies residues 1–25 (MKLSAFTLAFALILMMAIMYNMAEA). Positions 26 to 39 (AALADADADAEAIA) are excised as a propeptide.

In terms of tissue distribution, expressed by the venom gland.

It localises to the secreted. May have antimicrobial properties, like most ant linear peptides. In addition, when tested in vitro on the parasite Trypanosoma cruzi (responsible of the Chagas disease), is able to moderately reduce the number of the three forms (epimastigote, trypomastigote and amastigote) by inducing cell death through necrosis. This Dinoponera quadriceps (South American ant) protein is M-poneratoxin-Dq4e.